The primary structure comprises 454 residues: tRNA modification GTPase MnmE (454 aa).

Positions 23, 80, and 120 each coordinate (6S)-5-formyl-5,6,7,8-tetrahydrofolate. A TrmE-type G domain is found at 216–377 (GMKVVIAGRP…LRNHLKQSMG (162 aa)). Asn-226 is a K(+) binding site. Residues 226–231 (NAGKSS), 245–251 (TDIAGTT), 270–273 (DTAG), 335–338 (NKAD), and 358–360 (SAR) contribute to the GTP site. Ser-230 serves as a coordination point for Mg(2+). Residues Thr-245, Ile-247, and Thr-250 each contribute to the K(+) site. Mg(2+) is bound at residue Thr-251. Lys-454 serves as a coordination point for (6S)-5-formyl-5,6,7,8-tetrahydrofolate.

It belongs to the TRAFAC class TrmE-Era-EngA-EngB-Septin-like GTPase superfamily. TrmE GTPase family. In terms of assembly, homodimer. Heterotetramer of two MnmE and two MnmG subunits. It depends on K(+) as a cofactor.

It localises to the cytoplasm. Functionally, exhibits a very high intrinsic GTPase hydrolysis rate. Involved in the addition of a carboxymethylaminomethyl (cmnm) group at the wobble position (U34) of certain tRNAs, forming tRNA-cmnm(5)s(2)U34. This Escherichia coli O127:H6 (strain E2348/69 / EPEC) protein is tRNA modification GTPase MnmE.